The sequence spans 423 residues: Probable serine/threonine-protein kinase PBL5 (423 aa).

Residues 1–66 (MGCFGCSKKS…DVNNEGGVGK (66 aa)) form a disordered region. G2 carries N-myristoyl glycine lipidation. C3 carries S-palmitoyl cysteine lipidation. Residues 12-22 (KRSETNKDTVI) show a composition bias toward basic and acidic residues. Positions 43-52 (TQPSSDSTKV) are enriched in polar residues. T92 carries the post-translational modification Phosphothreonine. Positions 103–380 (FRSDCFLGEG…SDVVLALNFL (278 aa)) constitute a Protein kinase domain. ATP is bound by residues 109–117 (LGEGGFGKV) and K132. The residue at position 177 (Y177) is a Phosphotyrosine. The active-site Proton acceptor is the D230. Phosphoserine is present on residues S234 and S264. A phosphothreonine mark is found at T265 and T270. A Phosphotyrosine modification is found at Y278. Residues 383–398 (SKYDPNSPSSSSGKNP) are compositionally biased toward low complexity. The interval 383-423 (SKYDPNSPSSSSGKNPSFHRDRDDEEKRPHLVKETECEGSS) is disordered. The segment covering 400 to 423 (FHRDRDDEEKRPHLVKETECEGSS) has biased composition (basic and acidic residues).

The protein belongs to the protein kinase superfamily. Ser/Thr protein kinase family. Palmitoylation at Cys-3 and Cys-6 are required for plasma membrane location.

The protein localises to the cell membrane. It carries out the reaction L-seryl-[protein] + ATP = O-phospho-L-seryl-[protein] + ADP + H(+). The enzyme catalyses L-threonyl-[protein] + ATP = O-phospho-L-threonyl-[protein] + ADP + H(+). In terms of biological role, may be involved in plant defense signaling. This chain is Probable serine/threonine-protein kinase PBL5, found in Arabidopsis thaliana (Mouse-ear cress).